A 60-amino-acid chain; its full sequence is Large ribosomal subunit protein uL30 (60 aa).

The protein belongs to the universal ribosomal protein uL30 family. Part of the 50S ribosomal subunit.

The sequence is that of Large ribosomal subunit protein uL30 from Shewanella sp. (strain MR-7).